The primary structure comprises 197 residues: Ribonuclease HII (197 aa).

The region spanning 7-197 (LGIAGVDEVG…SFLRKLFATV (191 aa)) is the RNase H type-2 domain. Residues Asp13, Glu14, and Asp109 each coordinate a divalent metal cation.

It belongs to the RNase HII family. Requires Mn(2+) as cofactor. It depends on Mg(2+) as a cofactor.

The protein localises to the cytoplasm. The enzyme catalyses Endonucleolytic cleavage to 5'-phosphomonoester.. In terms of biological role, endonuclease that specifically degrades the RNA of RNA-DNA hybrids. This chain is Ribonuclease HII, found in Synechococcus sp. (strain CC9311).